Here is a 332-residue protein sequence, read N- to C-terminus: RNA polymerase principal sigma factor HrdD (332 aa).

The segment at M1–G21 is disordered. The Polymerase core binding signature appears at D124 to V137. The H-T-H motif DNA-binding region spans L294–K313.

Belongs to the sigma-70 factor family.

Functionally, sigma factors are initiation factors that promote the attachment of RNA polymerase to specific initiation sites and are then released. The polypeptide is RNA polymerase principal sigma factor HrdD (hrdD) (Streptomyces griseus).